A 286-amino-acid chain; its full sequence is Flagellar filament 31.3 kDa core protein (286 aa).

Belongs to the bacterial flagellin family. In terms of assembly, the core of the flagellum consists of several antigenically related polypeptides. Post-translationally, glycosylated. Glycosylation is not essential for motility.

The protein localises to the periplasmic flagellum. It is found in the periplasm. Functionally, component of the core of the flagella. This chain is Flagellar filament 31.3 kDa core protein (flaB2), found in Treponema maltophilum.